The primary structure comprises 212 residues: FMN-dependent NADH:quinone oxidoreductase 1 (212 aa).

FMN-binding positions include Ser10, 16-18 (SHS), 97-100 (MYNF), and 145-148 (SRGG).

Belongs to the azoreductase type 1 family. As to quaternary structure, homodimer. FMN is required as a cofactor.

It catalyses the reaction 2 a quinone + NADH + H(+) = 2 a 1,4-benzosemiquinone + NAD(+). It carries out the reaction N,N-dimethyl-1,4-phenylenediamine + anthranilate + 2 NAD(+) = 2-(4-dimethylaminophenyl)diazenylbenzoate + 2 NADH + 2 H(+). Functionally, quinone reductase that provides resistance to thiol-specific stress caused by electrophilic quinones. Its function is as follows. Also exhibits azoreductase activity. Catalyzes the reductive cleavage of the azo bond in aromatic azo compounds to the corresponding amines. The sequence is that of FMN-dependent NADH:quinone oxidoreductase 1 from Pseudomonas fluorescens (strain Pf0-1).